Here is a 341-residue protein sequence, read N- to C-terminus: UDP-N-acetylenolpyruvoylglucosamine reductase (341 aa).

The 171-residue stretch at 15 to 185 (LAQSCADLVE…TAVGLRLVKR (171 aa)) folds into the FAD-binding PCMH-type domain. Arg-161 is a catalytic residue. Residue Ser-231 is the Proton donor of the active site. The active site involves Glu-327.

It belongs to the MurB family. FAD is required as a cofactor.

The protein resides in the cytoplasm. It carries out the reaction UDP-N-acetyl-alpha-D-muramate + NADP(+) = UDP-N-acetyl-3-O-(1-carboxyvinyl)-alpha-D-glucosamine + NADPH + H(+). It participates in cell wall biogenesis; peptidoglycan biosynthesis. In terms of biological role, cell wall formation. The protein is UDP-N-acetylenolpyruvoylglucosamine reductase of Shewanella baltica (strain OS195).